Here is a 266-residue protein sequence, read N- to C-terminus: Interleukin-1 beta (266 aa).

Residues 1-113 (MATVPEPINE…ETSSDELLCD (113 aa)) constitute a propeptide that is removed on maturation.

This sequence belongs to the IL-1 family. In terms of assembly, monomer. In its precursor form, weakly interacts with full-length MEFV; the mature cytokine does not interact at all. Interacts with integrins ITGAV:ITGBV and ITGA5:ITGB1; integrin-binding is required for IL1B signaling. Interacts with cargo receptor TMED10; the interaction is direct and is required for the secretion of IL1B mature form. Interacts with HSP90AB1; the interaction facilitates cargo translocation into the ERGIC. Interacts with HSP90B1; the interaction facilitates cargo translocation into the ERGIC.

The protein resides in the cytoplasm. It is found in the cytosol. The protein localises to the secreted. It localises to the lysosome. Its subcellular location is the extracellular exosome. Functionally, potent pro-inflammatory cytokine. Initially discovered as the major endogenous pyrogen, induces prostaglandin synthesis, neutrophil influx and activation, T-cell activation and cytokine production, B-cell activation and antibody production, and fibroblast proliferation and collagen production. Promotes Th17 differentiation of T-cells. Synergizes with IL12/interleukin-12 to induce IFNG synthesis from T-helper 1 (Th1) cells. Plays a role in angiogenesis by inducing VEGF production synergistically with TNF and IL6. Involved in transduction of inflammation downstream of pyroptosis: its mature form is specifically released in the extracellular milieu by passing through the gasdermin-D (GSDMD) pore. This chain is Interleukin-1 beta (IL1B), found in Ovis aries (Sheep).